The primary structure comprises 86 residues: Large ribosomal subunit protein eL43 (86 aa).

The C4-type zinc finger occupies 38 to 60 (CPFCGHKGKVYRLSTGVWACKKC).

The protein belongs to the eukaryotic ribosomal protein eL43 family. Requires Zn(2+) as cofactor.

This chain is Large ribosomal subunit protein eL43, found in Desulfurococcus amylolyticus (strain DSM 18924 / JCM 16383 / VKM B-2413 / 1221n) (Desulfurococcus kamchatkensis).